The chain runs to 435 residues: Cytochrome c biogenesis protein Ccs1 (435 aa).

The next 3 membrane-spanning stretches (helical) occupy residues 17–37 (LSLS…GTII), 77–97 (NPCF…CTFS), and 163–183 (IAPI…LISL).

It belongs to the Ccs1/CcsB family. In terms of assembly, may interact with CcsA.

It is found in the plastid. The protein resides in the chloroplast thylakoid membrane. Required during biogenesis of c-type cytochromes (cytochrome c6 and cytochrome f) at the step of heme attachment. In Gracilaria tenuistipitata var. liui (Red alga), this protein is Cytochrome c biogenesis protein Ccs1.